Reading from the N-terminus, the 77-residue chain is Small ribosomal subunit protein bS21 (77 aa).

The disordered stretch occupies residues R55–R77.

This sequence belongs to the bacterial ribosomal protein bS21 family.

The polypeptide is Small ribosomal subunit protein bS21 (Bartonella quintana (strain Toulouse) (Rochalimaea quintana)).